Here is a 119-residue protein sequence, read N- to C-terminus: Flagellar transcriptional regulator FlhD (119 aa).

Belongs to the FlhD family. As to quaternary structure, homodimer; disulfide-linked. Forms a heterohexamer composed of two FlhC and four FlhD subunits. Each FlhC binds a FlhD dimer, forming a heterotrimer, and a hexamer assembles by dimerization of two heterotrimers.

Its subcellular location is the cytoplasm. In terms of biological role, functions in complex with FlhC as a master transcriptional regulator that regulates transcription of several flagellar and non-flagellar operons by binding to their promoter region. Activates expression of class 2 flagellar genes, including fliA, which is a flagellum-specific sigma factor that turns on the class 3 genes. Also regulates genes whose products function in a variety of physiological pathways. This chain is Flagellar transcriptional regulator FlhD, found in Serratia marcescens.